A 195-amino-acid chain; its full sequence is UPF0314 protein RHE_CH03951 (195 aa).

The next 4 helical transmembrane spans lie at 14–34 (AFWFVACLAVLVAQIIAEYLM), 64–84 (WYTPSHIIHGFLFYGLGYLIL), 128–148 (DSILNSAMDTVFMCLGFFFAA), and 150–170 (APVALTVVIAIFFEIFTGYVI).

Belongs to the UPF0314 family.

It localises to the cell membrane. The polypeptide is UPF0314 protein RHE_CH03951 (Rhizobium etli (strain ATCC 51251 / DSM 11541 / JCM 21823 / NBRC 15573 / CFN 42)).